A 750-amino-acid chain; its full sequence is Xylosyl- and glucuronyltransferase LARGE2s (750 aa).

Over 1–10 the chain is Cytoplasmic; the sequence is MLCPCRGKLK. Residues 11–31 form a helical; Signal-anchor for type II membrane protein membrane-spanning segment; sequence LLVVSLSFVILFTWLYLLVGN. The Lumenal portion of the chain corresponds to 32-750; the sequence is SENGRSLLLS…LKYLTAQRNI (719 aa). N-linked (GlcNAc...) asparagine glycosylation is found at Asn116, Asn142, and Asn228. Positions 132 to 407 are xylosyltransferase activity; that stretch reads LHVACVCAGH…FLEYDGNLLR (276 aa). Asp236 and Asp238 together coordinate Mn(2+). An N-linked (GlcNAc...) asparagine glycan is attached at Asn266. Residues 408 to 750 form a glucuronyltransferase activity region; that stretch reads RELFGCPSQA…LKYLTAQRNI (343 aa). Mn(2+) is bound by residues Asp557 and Asp559.

It in the C-terminal section; belongs to the glycosyltransferase 49 family. The protein in the N-terminal section; belongs to the glycosyltransferase 8 family. Mn(2+) serves as cofactor.

Its subcellular location is the golgi apparatus membrane. The catalysed reaction is 3-O-[beta-D-GlcA-(1-&gt;3)-beta-D-Xyl-(1-&gt;4)-Rib-ol-P-Rib-ol-P-3-beta-D-GalNAc-(1-&gt;3)-beta-D-GlcNAc-(1-&gt;4)-(O-6-P-alpha-D-Man)]-Thr-[protein] + UDP-alpha-D-xylose = 3-O-[alpha-D-Xyl-(1-&gt;3)-beta-D-GlcA-(1-&gt;4)-beta-D-Xyl-(1-&gt;4)-Rib-ol-P-Rib-ol-P-3-beta-D-GalNAc-(1-&gt;3)-beta-D-GlcNAc-(1-&gt;4)-(O-6-P-alpha-D-Man)]-Thr-[protein] + UDP + H(+). The enzyme catalyses 3-O-{(1-&gt;[3)-alpha-D-Xyl-(1-&gt;3)-beta-D-GlcA-(1-&gt;](n)-4)-beta-D-Xyl-(1-&gt;4)-Rib-ol-P-Rib-ol-P-3-beta-D-GalNAc-(1-&gt;3)-beta-D-GlcNAc-(1-&gt;4)-O-6-P-alpha-D-Man}-L-Thr-[protein] + UDP-alpha-D-glucuronate = 3-O-{beta-D-GlcA-(1-&gt;[3)-alpha-D-Xyl-(1-&gt;3)-beta-D-GlcA-(1-&gt;](n)-4)-beta-D-Xyl-(1-&gt;4)-Rib-ol-P-Rib-ol-P-3-beta-D-GalNAc-(1-&gt;3)-beta-D-GlcNAc-(1-&gt;4)-O-6-P-alpha-D-Man}-L-Thr-[protein] + UDP + H(+). It carries out the reaction 3-O-{beta-D-GlcA-(1-&gt;[3)-alpha-D-Xyl-(1-&gt;3)-beta-D-GlcA-(1-&gt;](n)-4)-beta-D-Xyl-(1-&gt;4)-Rib-ol-P-Rib-ol-P-3-beta-D-GalNAc-(1-&gt;3)-beta-D-GlcNAc-(1-&gt;4)-O-6-P-alpha-D-Man}-L-Thr-[protein] + UDP-alpha-D-xylose = 3-O-{(1-&gt;[3)-alpha-D-Xyl-(1-&gt;3)-beta-D-GlcA-(1-&gt;](n+1)-4)-beta-D-Xyl-(1-&gt;4)-Rib-ol-P-Rib-ol-P-3-beta-D-GalNAc-(1-&gt;3)-beta-D-GlcNAc-(1-&gt;4)-O-6-P-alpha-D-Man}-L-Thr-[protein] + UDP + H(+). The protein operates within protein modification; protein glycosylation. Functionally, bifunctional glycosyltransferase with both alpha-1,3-xylosyltransferase and beta-1,3-glucuronyltransferase activities involved in the maturation of alpha-dystroglycan (DAG1) by glycosylation leading to DAG1 binding to laminin G-like domain-containing extracellular proteins with high affinity and in a phosphorylated-O-mannosyl trisaccharide dependent manner. Elongates the glucuronyl-beta-1,4-xylose-beta disaccharide primer structure by adding repeating units [-3-Xylose-alpha-1,3-GlcA-beta-1-] to produce a heteropolysaccharide. Supports the maturation of DAG1 more effectively than LARGE1. In addition, can modify both heparan sulfate (HS)- and chondroitin/dermatan sulfate (CS/DS)-proteoglycans (PGs), namely GPC4, with a glycosaminoglycan (GAG)-like polysaccharide composed of xylose and glucuronic acid to confer laminin binding. The sequence is that of Xylosyl- and glucuronyltransferase LARGE2s from Danio rerio (Zebrafish).